We begin with the raw amino-acid sequence, 296 residues long: 4-hydroxybenzoate octaprenyltransferase (296 aa).

8 consecutive transmembrane segments (helical) span residues 28–48, 51–71, 102–122, 143–163, 174–194, 212–232, 233–253, and 274–294; these read IGTL…SDGI, LAVL…GCVI, LLLT…LNHL, FFPI…PMAF, AWIL…VYAM, FGRY…LLMA, VLGA…IVLL, and FLAN…HTFF.

This sequence belongs to the UbiA prenyltransferase family. The cofactor is Mg(2+).

Its subcellular location is the cell inner membrane. The enzyme catalyses all-trans-octaprenyl diphosphate + 4-hydroxybenzoate = 4-hydroxy-3-(all-trans-octaprenyl)benzoate + diphosphate. Its pathway is cofactor biosynthesis; ubiquinone biosynthesis. Its function is as follows. Catalyzes the prenylation of para-hydroxybenzoate (PHB) with an all-trans polyprenyl group. Mediates the second step in the final reaction sequence of ubiquinone-8 (UQ-8) biosynthesis, which is the condensation of the polyisoprenoid side chain with PHB, generating the first membrane-bound Q intermediate 3-octaprenyl-4-hydroxybenzoate. This is 4-hydroxybenzoate octaprenyltransferase from Neisseria gonorrhoeae (strain NCCP11945).